Consider the following 194-residue polypeptide: Methyl-CpG-binding domain protein 3-like 1 (194 aa).

The interval 1–104 (MAKSSQRKQR…KLVPSYTGGS (104 aa)) is transcription repressor.

This sequence belongs to the MBD3L family. Highly expressed in testis. Detected at low levels in pancreas. Not detected in the other tissues tested.

It is found in the nucleus. Its function is as follows. Transcriptional repressor. The chain is Methyl-CpG-binding domain protein 3-like 1 (MBD3L1) from Homo sapiens (Human).